We begin with the raw amino-acid sequence, 407 residues long: Imidazolonepropionase (407 aa).

Fe(3+) contacts are provided by His-74 and His-76. His-74 and His-76 together coordinate Zn(2+). Positions 83, 146, and 179 each coordinate 4-imidazolone-5-propanoate. Residue Tyr-146 coordinates N-formimidoyl-L-glutamate. His-244 serves as a coordination point for Fe(3+). Residue His-244 coordinates Zn(2+). Gln-247 contacts 4-imidazolone-5-propanoate. Position 319 (Asp-319) interacts with Fe(3+). A Zn(2+)-binding site is contributed by Asp-319. N-formimidoyl-L-glutamate is bound by residues Asn-321 and Gly-323. Residue Thr-324 coordinates 4-imidazolone-5-propanoate.

The protein belongs to the metallo-dependent hydrolases superfamily. HutI family. Zn(2+) is required as a cofactor. It depends on Fe(3+) as a cofactor.

The protein resides in the cytoplasm. It catalyses the reaction 4-imidazolone-5-propanoate + H2O = N-formimidoyl-L-glutamate. Its pathway is amino-acid degradation; L-histidine degradation into L-glutamate; N-formimidoyl-L-glutamate from L-histidine: step 3/3. Catalyzes the hydrolytic cleavage of the carbon-nitrogen bond in imidazolone-5-propanoate to yield N-formimidoyl-L-glutamate. It is the third step in the universal histidine degradation pathway. The protein is Imidazolonepropionase of Salmonella heidelberg (strain SL476).